The sequence spans 218 residues: Ribose-5-phosphate isomerase A (218 aa).

Residues 28–31 (TGST), 81–84 (DGAD), and 94–97 (KGGG) each bind substrate. Glu103 acts as the Proton acceptor in catalysis. Lys121 is a substrate binding site.

Belongs to the ribose 5-phosphate isomerase family. Homodimer.

It catalyses the reaction aldehydo-D-ribose 5-phosphate = D-ribulose 5-phosphate. Its pathway is carbohydrate degradation; pentose phosphate pathway; D-ribose 5-phosphate from D-ribulose 5-phosphate (non-oxidative stage): step 1/1. Functionally, catalyzes the reversible conversion of ribose-5-phosphate to ribulose 5-phosphate. The polypeptide is Ribose-5-phosphate isomerase A (Colwellia psychrerythraea (strain 34H / ATCC BAA-681) (Vibrio psychroerythus)).